We begin with the raw amino-acid sequence, 567 residues long: ERO1-like protein 2 (567 aa).

Residues 1–22 form the signal peptide; that stretch reads MKIAKGLVGLLILYKNVCQVLC. N-linked (GlcNAc...) asparagine glycosylation is present at Asn-49. Intrachain disulfides connect Cys-88–Cys-386, Cys-98–Cys-103, Cys-154–Cys-325, and Cys-389–Cys-392. The FAD site is built by Arg-188, Thr-190, Trp-201, Ser-258, His-261, and Lys-290. Cys-389 (nucleophile) is an active-site residue. The active site involves Cys-392. An N-linked (GlcNAc...) asparagine glycan is attached at Asn-546.

The protein belongs to the EROs family. As to quaternary structure, may function both as a monomer and a homodimer. Requires FAD as cofactor. N-glycosylated.

The protein localises to the endoplasmic reticulum membrane. Essential oxidoreductase that oxidizes proteins in the endoplasmic reticulum to produce disulfide bonds. Acts by oxidizing directly pdi1 isomerase through a direct disulfide exchange. Does not act as a direct oxidant of folding substrate, but relies on pdi1 to transfer oxidizing equivalent. Does not oxidize all pdi related proteins, suggesting that it can discriminate between pdi1 and related proteins. Its reoxidation probably involves electron transfer to molecular oxygen via FAD. Acts independently of glutathione. May be responsible for a significant proportion of reactive oxygen species (ROS) in the cell, thereby being a source of oxidative stress. The polypeptide is ERO1-like protein 2 (ero12) (Schizosaccharomyces pombe (strain 972 / ATCC 24843) (Fission yeast)).